Reading from the N-terminus, the 405-residue chain is Eukaryotic initiation factor 4A (405 aa).

The Q motif motif lies at 32–60 (PTFESMGLREELLRGIFNYGFEKPSAIQQ). A Helicase ATP-binding domain is found at 63 to 233 (ILPIIKGRDT…EKFMTKPVRI (171 aa)). ATP is bound at residue 76-83 (AQSGTGKT). The DEAD box motif lies at 181–184 (DEAD). One can recognise a Helicase C-terminal domain in the interval 244–405 (GIKQFFVSVE…EMPVNFASII (162 aa)).

It belongs to the DEAD box helicase family. eIF4A subfamily.

It localises to the cytoplasm. It carries out the reaction ATP + H2O = ADP + phosphate + H(+). Its function is as follows. ATP-dependent RNA helicase which is a subunit of the eIF4F complex involved in cap recognition and is required for mRNA binding to ribosome. In the current model of translation initiation, eIF4A unwinds RNA secondary structures in the 5'-UTR of mRNAs which is necessary to allow efficient binding of the small ribosomal subunit, and subsequent scanning for the initiator codon. The sequence is that of Eukaryotic initiation factor 4A (tifA) from Dictyostelium discoideum (Social amoeba).